Consider the following 204-residue polypeptide: MTNIKLNYHKTHFLMSAPNIKVLPEDSGIEIAFAGRSNAGKSTALNALTQQKNLARTSKIPGRTQLINLFQVEPNCKLVDLPGYGYAAVPEQMKLQWQKSLGEYLQKRECLGGLVILMDIRHPLKDLDQQMIEWAVSADLPVLLLLTKADKLSQSARSKQVKMVREAILPFQGDVQVEAFSAQNKIGIERLSEKLDQWFSPLFS.

Residues 27 to 201 (SGIEIAFAGR…SEKLDQWFSP (175 aa)) form the EngB-type G domain. GTP is bound by residues 35–42 (GRSNAGKS), 62–66 (GRTQL), 80–83 (DLPG), 147–150 (TKAD), and 180–182 (FSA). Ser42 and Thr64 together coordinate Mg(2+).

This sequence belongs to the TRAFAC class TrmE-Era-EngA-EngB-Septin-like GTPase superfamily. EngB GTPase family. The cofactor is Mg(2+).

Its function is as follows. Necessary for normal cell division and for the maintenance of normal septation. This chain is Probable GTP-binding protein EngB, found in Histophilus somni (strain 129Pt) (Haemophilus somnus).